We begin with the raw amino-acid sequence, 276 residues long: Rhomboid protease GlpG (276 aa).

Transmembrane regions (helical) follow at residues 94–114, 142–162, 168–188, 193–213, 229–249, and 250–270; these read AGPL…LMQI, ALLH…WYLG, VLGT…SGWA, SGTY…YVWL, LMAF…GMSI, and ANAA…WDTY. The active-site Nucleophile is Ser201. His254 is an active-site residue.

This sequence belongs to the peptidase S54 family.

It localises to the cell inner membrane. It catalyses the reaction Cleaves type-1 transmembrane domains using a catalytic dyad composed of serine and histidine that are contributed by different transmembrane domains.. Functionally, rhomboid-type serine protease that catalyzes intramembrane proteolysis. The sequence is that of Rhomboid protease GlpG from Pectobacterium atrosepticum (strain SCRI 1043 / ATCC BAA-672) (Erwinia carotovora subsp. atroseptica).